Reading from the N-terminus, the 345-residue chain is Dihydroorotase (345 aa).

Residues His13 and His15 each coordinate Zn(2+). Residues 15–17 (HFR) and Asn41 contribute to the substrate site. Zn(2+) contacts are provided by Lys98, His135, and His173. Lys98 carries the N6-carboxylysine modification. His135 contacts substrate. Leu218 serves as a coordination point for substrate. Zn(2+) is bound at residue Asp246. Asp246 is an active-site residue. Substrate is bound by residues His250 and Ala262.

Belongs to the metallo-dependent hydrolases superfamily. DHOase family. Class II DHOase subfamily. In terms of assembly, homodimer. The cofactor is Zn(2+).

It carries out the reaction (S)-dihydroorotate + H2O = N-carbamoyl-L-aspartate + H(+). It functions in the pathway pyrimidine metabolism; UMP biosynthesis via de novo pathway; (S)-dihydroorotate from bicarbonate: step 3/3. Functionally, catalyzes the reversible cyclization of carbamoyl aspartate to dihydroorotate. The sequence is that of Dihydroorotase from Shewanella halifaxensis (strain HAW-EB4).